Consider the following 327-residue polypeptide: GMP reductase (327 aa).

The active-site Thioimidate intermediate is the Cys176. Position 205-228 (205-228 (IIADGGIRTHGDIAKSIRFGATMV)) interacts with NADP(+).

This sequence belongs to the IMPDH/GMPR family. GuaC type 2 subfamily.

It carries out the reaction IMP + NH4(+) + NADP(+) = GMP + NADPH + 2 H(+). Catalyzes the irreversible NADPH-dependent deamination of GMP to IMP. It functions in the conversion of nucleobase, nucleoside and nucleotide derivatives of G to A nucleotides, and in maintaining the intracellular balance of A and G nucleotides. The polypeptide is GMP reductase (Streptococcus equi subsp. equi (strain 4047)).